Reading from the N-terminus, the 467-residue chain is Probable rhamnogalacturonase A (467 aa).

The signal sequence occupies residues 1–19 (MHSLSLISLALLSPLLVNA). Cysteine 40 and cysteine 66 form a disulfide bridge. The Proton donor role is filled by aspartate 217. Residues cysteine 219 and cysteine 236 are joined by a disulfide bond. Asparagine 237 and asparagine 252 each carry an N-linked (GlcNAc...) asparagine glycan. Histidine 292 is an active-site residue. The N-linked (GlcNAc...) asparagine glycan is linked to asparagine 319. Disulfide bonds link cysteine 342-cysteine 348 and cysteine 370-cysteine 379.

This sequence belongs to the glycosyl hydrolase 28 family.

Its subcellular location is the secreted. The catalysed reaction is Endohydrolysis of alpha-D-GalA-(1-&gt;2)-alpha-L-Rha glycosidic bond in the rhamnogalacturonan I backbone with initial inversion of anomeric configuration releasing oligosaccharides with beta-D-GalA at the reducing end.. In terms of biological role, pectinolytic enzymes consist of four classes of enzymes: pectine lyase, polygalacturonase, pectin methylesterase and rhamnogalacturonase. Hydrolyzes alpha-D-galacturonopyranosyl-(1,2)-alpha-L-rhamnopyranosyl linkages in the backbone of the hairy regions of pectins. This chain is Probable rhamnogalacturonase A (rhgA), found in Aspergillus oryzae (strain ATCC 42149 / RIB 40) (Yellow koji mold).